We begin with the raw amino-acid sequence, 3419 residues long: Utrophin (3419 aa).

Positions 1–246 are actin-binding; that stretch reads MAKYGHLEAS…LPDKKSIIMY (246 aa). Y4 carries the phosphotyrosine modification. Residue S10 is modified to Phosphoserine. 2 consecutive Calponin-homology (CH) domains span residues 31–135 and 150–255; these read DVQK…LHWQ and TNSE…EVLP. The segment at 268-905 is interaction with SYNM; sequence TLPRKYKKEC…YQQQLENELK (638 aa). Residue S295 is modified to Phosphoserine. Spectrin repeat units lie at residues 312-416, 421-525, 532-636, 690-795, 801-901, 910-1012, 1019-1121, 1128-1229, 1236-1333, 1335-1436, 1438-1540, 1547-1648, 1653-1747, 1748-1840, 1841-1958, 1969-2070, and 2077-2176; these read DSYQ…SRLH, ELQK…NRLQ, QELL…NQVT, KKFD…RKIQ, NAYF…QQLE, PAYL…RSLE, RDFK…SRLS, MNLK…HTLE, VELL…ISLE, QLQV…LFQK, ANFE…QDLE, RKLK…NTLL, QLEV…INSA, QMLI…KIKA, IPQR…SDRR, KQFH…PRLK, and SGYR…KTRT. The tract at residues 1336–1761 is interaction with SYNM; the sequence is LQVLRETDHM…GQDPAGTVEA (426 aa). Residue S1998 is modified to Phosphoserine. A Phosphoserine modification is found at S2201. Spectrin repeat units lie at residues 2216–2319, 2336–2426, 2433–2542, 2549–2674, and 2681–2783; these read ADLD…QQLE, EELM…SALE, QTSR…AHLE, NRLL…KQVG, and RDLQ…KQLQ. A disordered region spans residues 2616–2640; sequence DQPIEAPEEPRRNPQSKTELTPEER. The interaction with SYNM stretch occupies residues 2785–3152; sequence AHRDFGPSSQ…TVLEGDNLET (368 aa). The region spanning 2799–2832 is the WW domain; it reads TSVQLPWQRSISHNKVPYYINHQTQTTCWDHPKM. The ZZ-type; degenerate zinc-finger motif lies at 3052-3108; that stretch reads KHQAKCNICKECPIVGFRYRSLKHFNYDVCQSCFFSGRTAKGHKLHYPMVEYCIPTT. The Zn(2+) site is built by C3057, C3060, C3081, and C3084. Disordered stretches follow at residues 3277-3296 and 3344-3395; these read RRGL…YHTS and DSDS…TDLT. At S3284 the chain carries Phosphoserine.

Homodimer. Interacts with the syntrophins SNTA1; SNTB1 and SNTB2. Interacts with SYNM. Interacts (via its WWW and ZZ domains) with DAG1 (via the PPXY motif of betaDAG1); the interaction is inhibited by the tyrosine phosphorylation of the PPXY motif of DAG1. Interacts with DTNB. Interacts with PGM5.

The protein resides in the postsynaptic cell membrane. The protein localises to the cytoplasm. It is found in the cytoskeleton. May play a role in anchoring the cytoskeleton to the plasma membrane. This is Utrophin from Rattus norvegicus (Rat).